A 463-amino-acid polypeptide reads, in one-letter code: Probable glucan endo-1,3-beta-glucosidase eglC (463 aa).

A signal peptide spans 1-18 (MQLTHLLAFALSLATSEA). Asn-84 is a glycosylation site (N-linked (GlcNAc...) asparagine). Residue Glu-128 is the Proton donor of the active site. N-linked (GlcNAc...) asparagine glycosylation occurs at Asn-183. Residue Glu-239 is the Nucleophile of the active site. Asn-312 carries an N-linked (GlcNAc...) asparagine glycan. Disordered regions lie at residues 317–354 (SASA…SSAV) and 396–430 (SGSS…NSGA). Gly-440 is lipidated: GPI-anchor amidated glycine. The propeptide at 441–463 (GASSVSGSVFGALVAVFAFVATL) is removed in mature form.

This sequence belongs to the glycosyl hydrolase 17 family. Post-translationally, the GPI-anchor is attached to the protein in the endoplasmic reticulum and serves to target the protein to the cell surface. There, the glucosamine-inositol phospholipid moiety is cleaved off and the GPI-modified mannoprotein is covalently attached via its lipidless GPI glycan remnant to the 1,6-beta-glucan of the outer cell wall layer.

It is found in the cell membrane. The protein localises to the secreted. The protein resides in the cell wall. The catalysed reaction is Hydrolysis of (1-&gt;3)-beta-D-glucosidic linkages in (1-&gt;3)-beta-D-glucans.. Functionally, glucanases play a role in cell expansion during growth, in cell-cell fusion during mating, and in spore release during sporulation. This enzyme may be involved in beta-glucan degradation and also function biosynthetically as a transglycosylase. The protein is Probable glucan endo-1,3-beta-glucosidase eglC (eglC) of Aspergillus oryzae (strain ATCC 42149 / RIB 40) (Yellow koji mold).